The sequence spans 303 residues: 1D-myo-inositol 2-acetamido-2-deoxy-alpha-D-glucopyranoside deacetylase (303 aa).

H13, D16, and H147 together coordinate Zn(2+).

The protein belongs to the MshB deacetylase family. Requires Zn(2+) as cofactor.

It catalyses the reaction 1D-myo-inositol 2-acetamido-2-deoxy-alpha-D-glucopyranoside + H2O = 1D-myo-inositol 2-amino-2-deoxy-alpha-D-glucopyranoside + acetate. Its function is as follows. Catalyzes the deacetylation of 1D-myo-inositol 2-acetamido-2-deoxy-alpha-D-glucopyranoside (GlcNAc-Ins) in the mycothiol biosynthesis pathway. The sequence is that of 1D-myo-inositol 2-acetamido-2-deoxy-alpha-D-glucopyranoside deacetylase from Mycobacterium tuberculosis (strain ATCC 25177 / H37Ra).